The chain runs to 417 residues: Pelargonidin 3-O-(6-caffeoylglucoside) 5-O-(6-O-malonylglucoside) 4'''-malonyltransferase (417 aa).

Catalysis depends on proton acceptor residues His-147 and Asp-360.

This sequence belongs to the plant acyltransferase family. In terms of assembly, monomer. Expressed at higher level in recently opened, fully pigmented flowers.

It carries out the reaction 4'''-demalonylsalvianin + malonyl-CoA = salvianin + CoA. It functions in the pathway pigment biosynthesis; anthocyanin biosynthesis. Its activity is regulated as follows. Inhibited by the following metal ions: Cd(2+), Cu(2+), Fe(2+), Hg(2+) and Zn(2+). Activity is strongly inhibited by CoA-SH and partially inhibited by acetyl-CoA, caffeic acid and bisdemalonylsalvianin. Catalyzes the transfer of the malonyl group from malonyl-CoA to the 4'''-hydroxyl group of the 5-glucosyl moiety of anthocyanins. Anthocyanins are ubiquitous colored pigments that are responsible for petal color. The chain is Pelargonidin 3-O-(6-caffeoylglucoside) 5-O-(6-O-malonylglucoside) 4'''-malonyltransferase from Salvia splendens (Scarlet sage).